We begin with the raw amino-acid sequence, 269 residues long: MASSSASSVPAPSGSVITIASASASAAANTAACGTGSPCAACKFLRRKCQPDCVFAPYFPPDNPQKFVHVHRVFGASNVTKLLNELHPYQREDAVNSLAYEADMRLRDPVYGCVAIISILQRNLRQLQQDLARAKFELSKYQQAAAAAAAASASTGTNNGPHSMAEFIGNAVPNGAQSFINVGHSAALASVGGAAACFGQEQQFSAVHMLSRSYEGEPIARLGGNGGYEFGYSTSMAGGGHMSGLGALGGAPFLKSGIAGSDERQGAGQ.

An LOB domain is found at Ser37–Leu138.

The protein belongs to the LOB domain-containing protein family.

The protein resides in the nucleus. Negative regulator of cell proliferation in the adaxial side of leaves. Regulates the formation of a symmetric lamina and the establishment of venation. The protein is LOB domain-containing protein 6 (LBD6) of Oryza sativa subsp. indica (Rice).